Reading from the N-terminus, the 71-residue chain is uncharacterized protein (71 aa).

Residues 1–23 form the signal peptide; it reads MTLLIILILKYLLCLENLKNISL. 4 N-linked (GlcNAc...) asparagine glycosylation sites follow: asparagine 20, asparagine 28, asparagine 44, and asparagine 50.

The protein resides in the secreted. This is an uncharacterized protein from Dictyostelium discoideum (Social amoeba).